The sequence spans 229 residues: uncharacterized protein (229 aa).

A signal peptide spans 1-26 (MSRNDARYLRCTAALGAAFFACGAAA).

Belongs to the OmpW/AlkL family.

Its subcellular location is the cell outer membrane. This is an uncharacterized protein from Sinorhizobium fredii (strain NBRC 101917 / NGR234).